The chain runs to 295 residues: Acetyl-coenzyme A carboxylase carboxyl transferase subunit beta (295 aa).

The tract at residues 1–20 is disordered; sequence MSWLSKLMPSGIRTENTPAK. The region spanning 28 to 295 is the CoA carboxyltransferase N-terminal domain; the sequence is LWEKCSNCGS…QPHPQDADAA (268 aa). Zn(2+)-binding residues include cysteine 32, cysteine 35, cysteine 51, and cysteine 54. The segment at 32–54 adopts a C4-type zinc-finger fold; the sequence is CSNCGSALYGPELEENLEVCPKC.

Belongs to the AccD/PCCB family. Acetyl-CoA carboxylase is a heterohexamer composed of biotin carboxyl carrier protein (AccB), biotin carboxylase (AccC) and two subunits each of ACCase subunit alpha (AccA) and ACCase subunit beta (AccD). The cofactor is Zn(2+).

It is found in the cytoplasm. The enzyme catalyses N(6)-carboxybiotinyl-L-lysyl-[protein] + acetyl-CoA = N(6)-biotinyl-L-lysyl-[protein] + malonyl-CoA. It participates in lipid metabolism; malonyl-CoA biosynthesis; malonyl-CoA from acetyl-CoA: step 1/1. Functionally, component of the acetyl coenzyme A carboxylase (ACC) complex. Biotin carboxylase (BC) catalyzes the carboxylation of biotin on its carrier protein (BCCP) and then the CO(2) group is transferred by the transcarboxylase to acetyl-CoA to form malonyl-CoA. In Xanthomonas campestris pv. campestris (strain 8004), this protein is Acetyl-coenzyme A carboxylase carboxyl transferase subunit beta.